A 106-amino-acid chain; its full sequence is UPF0473 protein LCABL_08490 (106 aa).

It belongs to the UPF0473 family.

The chain is UPF0473 protein LCABL_08490 from Lacticaseibacillus casei (strain BL23) (Lactobacillus casei).